A 332-amino-acid chain; its full sequence is MKASLPWSVVWRAQSNYVRLRRVLKLCELWLLLVGSGLNAKLPLEEDVDFINEYVGLHNELRGTVFPPGVNLRFMTWDVALSRTARAWGKKCMYSRNTHLDKLHESHPVFTEIGENMWVGPVEDFTVTTAIRSWHEERKSYSYLNDTCVEDQNCSHYIQLVWDSSYKVGCAVTSCARAGGFTHAALFICNYAPGGTLTRRPYQAGQFCSRCGPGDQCTDYLCSNTVRDEATYYQFWYPPWEKPRPVVCNPMCIFILFLRVASLLLCVIVVLIVQSRFPVILMETPTIISAEEEGKTEVEIVMEEGEGEGEGGEGEGEGEEKEEEEMLEEDEQ.

Residues 57 to 191 (LHNELRGTVF…THAALFICNY (135 aa)) form the SCP domain. A glycan (N-linked (GlcNAc...) asparagine) is linked at Asn145. A helical membrane pass occupies residues 253–273 (IFILFLRVASLLLCVIVVLIV). The disordered stretch occupies residues 293–332 (EGKTEVEIVMEEGEGEGEGGEGEGEGEEKEEEEMLEEDEQ). The segment covering 300–332 (IVMEEGEGEGEGGEGEGEGEEKEEEEMLEEDEQ) has biased composition (acidic residues).

It belongs to the CRISP family.

The protein localises to the membrane. The sequence is that of GLIPR1-like protein 2 (Glipr1l2) from Mus musculus (Mouse).